The primary structure comprises 327 residues: Flotillin-like protein FloA (327 aa).

2 consecutive transmembrane segments (helical) span residues 8–28 and 29–49; these read VLLITGGILIFLAIFFTLVPI and PLWISSLAAGVRVSIFTLVGM.

This sequence belongs to the flotillin-like FloA family. In terms of assembly, homooligomerizes.

The protein resides in the cell membrane. The protein localises to the membrane raft. Found in functional membrane microdomains (FMM) that may be equivalent to eukaryotic membrane rafts. FMMs are highly dynamic and increase in number as cells age. Flotillins are thought to be important factors in membrane fluidity. The polypeptide is Flotillin-like protein FloA (Exiguobacterium sibiricum (strain DSM 17290 / CCUG 55495 / CIP 109462 / JCM 13490 / 255-15)).